The following is a 1368-amino-acid chain: DNA-directed RNA polymerase subunit beta' (1368 aa).

The disordered stretch occupies residues 1–38 (MTSSSKPARKTSKSKSKASKAAEAPAAPSNELSREAPT). Residues 7 to 18 (PARKTSKSKSKA) are compositionally biased toward basic residues. Positions 19–29 (SKAAEAPAAPS) are enriched in low complexity. 4 residues coordinate Zn(2+): Cys-250, Cys-318, Cys-325, and Cys-328. A disordered region spans residues 1340 to 1368 (AGEELAEEHVPDPGALEGLQEEGLLSQDS). Residues 1353–1368 (GALEGLQEEGLLSQDS) show a composition bias toward low complexity.

It belongs to the RNA polymerase beta' chain family. RpoC2 subfamily. As to quaternary structure, in cyanobacteria the RNAP catalytic core is composed of 2 alpha, 1 beta, 1 beta', 1 gamma and 1 omega subunit. When a sigma factor is associated with the core the holoenzyme is formed, which can initiate transcription. It depends on Zn(2+) as a cofactor.

It carries out the reaction RNA(n) + a ribonucleoside 5'-triphosphate = RNA(n+1) + diphosphate. Functionally, DNA-dependent RNA polymerase catalyzes the transcription of DNA into RNA using the four ribonucleoside triphosphates as substrates. In Synechococcus sp. (strain RCC307), this protein is DNA-directed RNA polymerase subunit beta'.